The sequence spans 430 residues: MSSVVVVGTQWGDEGKGKITDFLSENAEAIARYQGGNNAGHTIKFDGETYKLHLIPSGIFYKEKISVIGNGMVVDPKALVEELKYLHDKGVDTSNLRISNRAHIILPYHIRIDEADEERKGANKIGTTKKGIGPAYMDKAARVGIRIIDLLDKETFKEKLEHNLGEKNRLLERFYELEGFKLEDILEEYYGYGQQFKDYVCDTSVVLNDALDDGKRVLFEGAQGVMLDIDQGTYPFVTSSNPIAGGVTIGSGVGPSKINHVVGVAKAYTTRVGDGPFPTELFDSIGDNIREVGREYGTTTGRPRRVGWFDSVVVRHARRVSGLTDLSLTLLDVLTGIETLKICVAYKLDGKTITEFPASLKDLARCEPVYEELPGWTEDITEVKSLDDLPVNCRHYMERIAQLTGVQVSMFSVGPDRAQTHVVKSVWRLA.

GTP is bound by residues 12–18 and 40–42; these read GDEGKGK and GHT. Catalysis depends on Asp-13, which acts as the Proton acceptor. The Mg(2+) site is built by Asp-13 and Gly-40. Residues 13–16, 38–41, Thr-128, Arg-142, Gln-223, Thr-238, and Arg-302 each bind IMP; these read DEGK and NAGH. His-41 functions as the Proton donor in the catalytic mechanism. 298 to 304 is a binding site for substrate; it reads TTTGRPR. GTP is bound by residues Arg-304, 330 to 332, and 412 to 414; these read LLD and SVG.

The protein belongs to the adenylosuccinate synthetase family. As to quaternary structure, homodimer. Mg(2+) serves as cofactor.

The protein resides in the cytoplasm. It catalyses the reaction IMP + L-aspartate + GTP = N(6)-(1,2-dicarboxyethyl)-AMP + GDP + phosphate + 2 H(+). The protein operates within purine metabolism; AMP biosynthesis via de novo pathway; AMP from IMP: step 1/2. Functionally, plays an important role in the de novo pathway of purine nucleotide biosynthesis. Catalyzes the first committed step in the biosynthesis of AMP from IMP. The chain is Adenylosuccinate synthetase from Listeria welshimeri serovar 6b (strain ATCC 35897 / DSM 20650 / CCUG 15529 / CIP 8149 / NCTC 11857 / SLCC 5334 / V8).